We begin with the raw amino-acid sequence, 195 residues long: MNPHERIERHFSAHIEAAQEALTMLGDAIEIAAAKLAHCLLSDGKILCCGNGGSAAQAQHFSSEMLNRFERERPGLPAVALTTDTSTLTSIANDYHFDEVFAKQVRALGHAGDILVIYSTSGISPSVLSAAVAAQDRDMSIIALNGRDGGTLAPLLRDTDVEIRVTAPSTARIQEIHLLITHCLCDLVDHQLFGE.

One can recognise an SIS domain in the interval 36–195; the sequence is LAHCLLSDGK…DLVDHQLFGE (160 aa). 51 to 53 is a binding site for substrate; sequence NGG. The Zn(2+) site is built by H60 and E64. Residues E64, 93 to 94, 119 to 121, S124, and Q174 each bind substrate; these read ND and STS. Q174 and H182 together coordinate Zn(2+).

This sequence belongs to the SIS family. GmhA subfamily. As to quaternary structure, homotetramer. Requires Zn(2+) as cofactor.

Its subcellular location is the cytoplasm. It catalyses the reaction 2 D-sedoheptulose 7-phosphate = D-glycero-alpha-D-manno-heptose 7-phosphate + D-glycero-beta-D-manno-heptose 7-phosphate. The protein operates within carbohydrate biosynthesis; D-glycero-D-manno-heptose 7-phosphate biosynthesis; D-glycero-alpha-D-manno-heptose 7-phosphate and D-glycero-beta-D-manno-heptose 7-phosphate from sedoheptulose 7-phosphate: step 1/1. In terms of biological role, catalyzes the isomerization of sedoheptulose 7-phosphate in D-glycero-D-manno-heptose 7-phosphate. In Methylococcus capsulatus (strain ATCC 33009 / NCIMB 11132 / Bath), this protein is Phosphoheptose isomerase.